The chain runs to 237 residues: MGRAYQNKKDSMAKTAGAKTKVYSKYGKEIYICAKNGGTDPDGNLSLRRLIERAKKDQVPAHVIDRAIDKAKGGGGEDYVATRYEGYGPGNCMIIVDCLTDNNKRTFADVRVCFTKANAKIGAQNSVSHLFDHLAIFVFDGDDDETVLEALMMADVDVTDVEVENGKVTVFAPHTEYNNTRTALEEMGVTEFDEDLISFVPQIAAPIEGEDVEVMERFLAMLEDCDDVQNVYHNAEF.

The protein belongs to the TACO1 family.

It localises to the cytoplasm. The sequence is that of Probable transcriptional regulatory protein PSHAa1370 from Pseudoalteromonas translucida (strain TAC 125).